Here is a 539-residue protein sequence, read N- to C-terminus: Putative S-adenosyl-L-methionine-dependent methyltransferase MAP_4079 (539 aa).

S-adenosyl-L-methionine contacts are provided by residues D134 and 163-164 (DL). Residues 290 to 392 (AGYGRGRRRP…RGEPGERGGQ (103 aa)) form a disordered region. Polar residues predominate over residues 301–313 (SATSCRGTCSSPR). Over residues 341–351 (HGFGNQCGGPD) the composition is skewed to gly residues.

Belongs to the UPF0677 family.

Functionally, exhibits S-adenosyl-L-methionine-dependent methyltransferase activity. The sequence is that of Putative S-adenosyl-L-methionine-dependent methyltransferase MAP_4079 from Mycolicibacterium paratuberculosis (strain ATCC BAA-968 / K-10) (Mycobacterium paratuberculosis).